Consider the following 392-residue polypeptide: Branched-chain-amino-acid aminotransferase, mitochondrial (392 aa).

Residues 1-27 constitute a mitochondrion transit peptide; the sequence is MAAAALGQIWARKFLSVPWLLCGPRRY. Tyrosine 168 is a binding site for substrate. Lysine 229 carries the post-translational modification N6-(pyridoxal phosphate)lysine. The residue at position 321 (lysine 321) is an N6-acetyllysine.

It belongs to the class-IV pyridoxal-phosphate-dependent aminotransferase family. Homodimer. The cofactor is pyridoxal 5'-phosphate.

It localises to the mitochondrion. It catalyses the reaction L-leucine + 2-oxoglutarate = 4-methyl-2-oxopentanoate + L-glutamate. It carries out the reaction L-isoleucine + 2-oxoglutarate = (S)-3-methyl-2-oxopentanoate + L-glutamate. The enzyme catalyses L-valine + 2-oxoglutarate = 3-methyl-2-oxobutanoate + L-glutamate. Catalyzes the first reaction in the catabolism of the essential branched chain amino acids leucine, isoleucine, and valine. May also function as a transporter of branched chain alpha-keto acids. This Pongo abelii (Sumatran orangutan) protein is Branched-chain-amino-acid aminotransferase, mitochondrial (BCAT2).